Here is a 226-residue protein sequence, read N- to C-terminus: Glutathione peroxidase 3 (226 aa).

An N-terminal signal peptide occupies residues 1-24 (MARILRASCLLSLLLAGFVPPGRG). Sec73 is a catalytic residue. Residue Sec73 is a non-standard amino acid, selenocysteine.

This sequence belongs to the glutathione peroxidase family. As to quaternary structure, homotetramer. As to expression, secreted in plasma.

Its subcellular location is the secreted. The catalysed reaction is 2 glutathione + H2O2 = glutathione disulfide + 2 H2O. It carries out the reaction tert-butyl hydroperoxide + 2 glutathione = tert-butanol + glutathione disulfide + H2O. Its function is as follows. Protects cells and enzymes from oxidative damage, by catalyzing the reduction of hydrogen peroxide, lipid peroxides and organic hydroperoxide, by glutathione. This chain is Glutathione peroxidase 3, found in Rattus norvegicus (Rat).